Here is a 259-residue protein sequence, read N- to C-terminus: Thiazole synthase (259 aa).

Catalysis depends on K98, which acts as the Schiff-base intermediate with DXP. 1-deoxy-D-xylulose 5-phosphate contacts are provided by residues G159, 185-186 (AG), and 207-208 (NS).

The protein belongs to the ThiG family. As to quaternary structure, homotetramer. Forms heterodimers with either ThiH or ThiS.

It localises to the cytoplasm. It carries out the reaction [ThiS sulfur-carrier protein]-C-terminal-Gly-aminoethanethioate + 2-iminoacetate + 1-deoxy-D-xylulose 5-phosphate = [ThiS sulfur-carrier protein]-C-terminal Gly-Gly + 2-[(2R,5Z)-2-carboxy-4-methylthiazol-5(2H)-ylidene]ethyl phosphate + 2 H2O + H(+). Its pathway is cofactor biosynthesis; thiamine diphosphate biosynthesis. Its function is as follows. Catalyzes the rearrangement of 1-deoxy-D-xylulose 5-phosphate (DXP) to produce the thiazole phosphate moiety of thiamine. Sulfur is provided by the thiocarboxylate moiety of the carrier protein ThiS. In vitro, sulfur can be provided by H(2)S. In Chlorobaculum tepidum (strain ATCC 49652 / DSM 12025 / NBRC 103806 / TLS) (Chlorobium tepidum), this protein is Thiazole synthase.